The following is a 366-amino-acid chain: Carbamoyl phosphate synthase small chain (366 aa).

Residues methionine 1–aspartate 168 are CPSase. L-glutamine-binding residues include serine 45, glycine 220, and glycine 222. Residues lysine 172–glutamate 363 form the Glutamine amidotransferase type-1 domain. Cysteine 247 (nucleophile) is an active-site residue. L-glutamine is bound by residues leucine 248, glutamine 251, asparagine 289, glycine 291, and phenylalanine 292. Catalysis depends on residues histidine 336 and glutamate 338.

This sequence belongs to the CarA family. Composed of two chains; the small (or glutamine) chain promotes the hydrolysis of glutamine to ammonia, which is used by the large (or ammonia) chain to synthesize carbamoyl phosphate. Tetramer of heterodimers (alpha,beta)4.

It carries out the reaction hydrogencarbonate + L-glutamine + 2 ATP + H2O = carbamoyl phosphate + L-glutamate + 2 ADP + phosphate + 2 H(+). The enzyme catalyses L-glutamine + H2O = L-glutamate + NH4(+). It functions in the pathway amino-acid biosynthesis; L-arginine biosynthesis; carbamoyl phosphate from bicarbonate: step 1/1. The protein operates within pyrimidine metabolism; UMP biosynthesis via de novo pathway; (S)-dihydroorotate from bicarbonate: step 1/3. Functionally, small subunit of the glutamine-dependent carbamoyl phosphate synthetase (CPSase). CPSase catalyzes the formation of carbamoyl phosphate from the ammonia moiety of glutamine, carbonate, and phosphate donated by ATP, constituting the first step of 2 biosynthetic pathways, one leading to arginine and/or urea and the other to pyrimidine nucleotides. The small subunit (glutamine amidotransferase) binds and cleaves glutamine to supply the large subunit with the substrate ammonia. In Methanococcus maripaludis (strain C6 / ATCC BAA-1332), this protein is Carbamoyl phosphate synthase small chain.